The primary structure comprises 84 residues: Small ribosomal subunit protein uS17 (84 aa).

It belongs to the universal ribosomal protein uS17 family. As to quaternary structure, part of the 30S ribosomal subunit.

Functionally, one of the primary rRNA binding proteins, it binds specifically to the 5'-end of 16S ribosomal RNA. This is Small ribosomal subunit protein uS17 from Alkaliphilus metalliredigens (strain QYMF).